A 194-amino-acid chain; its full sequence is Large ribosomal subunit protein eL15 (194 aa).

The tract at residues 160-194 (RGLTSAGKKGRGLMYKGKGTEKVRPSVRANSKKAK) is disordered.

Belongs to the eukaryotic ribosomal protein eL15 family.

This Methanococcus maripaludis (strain C7 / ATCC BAA-1331) protein is Large ribosomal subunit protein eL15.